Consider the following 154-residue polypeptide: Holo-[acyl-carrier-protein] synthase (154 aa).

Mg(2+) contacts are provided by Asp-8 and Glu-57.

It belongs to the P-Pant transferase superfamily. AcpS family. Requires Mg(2+) as cofactor.

It is found in the cytoplasm. The catalysed reaction is apo-[ACP] + CoA = holo-[ACP] + adenosine 3',5'-bisphosphate + H(+). Its function is as follows. Transfers the 4'-phosphopantetheine moiety from coenzyme A to a Ser of acyl-carrier-protein. This is Holo-[acyl-carrier-protein] synthase from Nitrosococcus oceani (strain ATCC 19707 / BCRC 17464 / JCM 30415 / NCIMB 11848 / C-107).